The following is a 492-amino-acid chain: GTPase Der (492 aa).

2 EngA-type G domains span residues 3-167 and 207-382; these read FTLA…EKFE and LQVA…DVWN. GTP-binding positions include 9–16, 56–60, 119–122, 213–220, 260–264, and 325–328; these read GRPNVGKS, DSAGL, NKSE, GRPNAGKS, DTAGM, and NKWD. Residues 383-469 enclose the KH-like domain; sequence RRVPTAALNR…RLTLRGQGDK (87 aa). Residues 461-492 are disordered; sequence LTLRGQGDKNPYKGKKKSTPSRLRKHLEGRKS. The segment covering 472 to 492 has biased composition (basic residues); that stretch reads YKGKKKSTPSRLRKHLEGRKS.

Belongs to the TRAFAC class TrmE-Era-EngA-EngB-Septin-like GTPase superfamily. EngA (Der) GTPase family. As to quaternary structure, associates with the 50S ribosomal subunit.

Functionally, GTPase that plays an essential role in the late steps of ribosome biogenesis. In Ruegeria sp. (strain TM1040) (Silicibacter sp.), this protein is GTPase Der.